The following is a 183-amino-acid chain: Dual-action ribosomal maturation protein DarP (183 aa).

Belongs to the DarP family.

The protein resides in the cytoplasm. Member of a network of 50S ribosomal subunit biogenesis factors which assembles along the 30S-50S interface, preventing incorrect 23S rRNA structures from forming. Promotes peptidyl transferase center (PTC) maturation. The protein is Dual-action ribosomal maturation protein DarP of Escherichia coli O7:K1 (strain IAI39 / ExPEC).